The following is a 108-amino-acid chain: Competence protein ComGC (108 aa).

Residues 1–13 (MKKMMTFLKKAKV) form the signal peptide. Residues 14–39 (KAFTLVEMLVVLLIISVLFLLFVPNL) are may be involved in polymerization of ComGC. Phe16 is subject to N-methylphenylalanine. Residues 16 to 36 (FTLVEMLVVLLIISVLFLLFV) form a helical membrane-spanning segment.

The protein belongs to the ComGC family. The transformation pili are flexible filaments, consisting mainly of the major pilin ComGC and smaller amounts of the minor pilins, including at least ComGD, ComGF and ComGG, and perhaps ComGE. Homodimer. Forms higher-order multimers. Interacts with ComGG; the interaction is probably direct. Post-translationally, undergoes proteolytic cleavage.

The protein resides in the cell membrane. The protein localises to the cell surface. Its subcellular location is the fimbrium. It is found in the secreted. Functionally, major component of the type IV-like pilus (T4P) that plays a role in transformation. Transformation pili are dynamically extended and retracted, perhaps thereby promoting DNA uptake and transformation. Required for transformation. Required for DNA binding. This Streptococcus pneumoniae serotype 4 (strain ATCC BAA-334 / TIGR4) protein is Competence protein ComGC.